Consider the following 126-residue polypeptide: Holo-[acyl-carrier-protein] synthase (126 aa).

Mg(2+) is bound by residues Asp9 and Glu58.

Belongs to the P-Pant transferase superfamily. AcpS family. In terms of assembly, homodimer. Requires Mg(2+) as cofactor.

The protein resides in the cytoplasm. The enzyme catalyses apo-[ACP] + CoA = holo-[ACP] + adenosine 3',5'-bisphosphate + H(+). In terms of biological role, transfers the 4'-phosphopantetheine moiety from coenzyme A to the 'Ser-36' of acyl-carrier-protein. The polypeptide is Holo-[acyl-carrier-protein] synthase (Escherichia coli O157:H7).